Consider the following 411-residue polypeptide: Dihydrofolate synthase/folylpolyglutamate synthase (411 aa).

53-56 serves as a coordination point for ATP; it reads GKGT. A Mg(2+)-binding site is contributed by Ser-77. Residues 116-119 and 147-149 each bind 7,8-dihydropteroate; these read TYFE and LDA. His-167 is a binding site for Mg(2+). 2 residues coordinate ATP: Arg-283 and Asp-296.

It belongs to the folylpolyglutamate synthase family. Monomer. Mg(2+) is required as a cofactor.

The enzyme catalyses 7,8-dihydropteroate + L-glutamate + ATP = 7,8-dihydrofolate + ADP + phosphate + H(+). The catalysed reaction is (6S)-5,6,7,8-tetrahydrofolyl-(gamma-L-Glu)(n) + L-glutamate + ATP = (6S)-5,6,7,8-tetrahydrofolyl-(gamma-L-Glu)(n+1) + ADP + phosphate + H(+). It carries out the reaction 10-formyltetrahydrofolyl-(gamma-L-Glu)(n) + L-glutamate + ATP = 10-formyltetrahydrofolyl-(gamma-L-Glu)(n+1) + ADP + phosphate + H(+). It catalyses the reaction (6R)-5,10-methylenetetrahydrofolyl-(gamma-L-Glu)(n) + L-glutamate + ATP = (6R)-5,10-methylenetetrahydrofolyl-(gamma-L-Glu)(n+1) + ADP + phosphate + H(+). It participates in cofactor biosynthesis; tetrahydrofolate biosynthesis; 7,8-dihydrofolate from 2-amino-4-hydroxy-6-hydroxymethyl-7,8-dihydropteridine diphosphate and 4-aminobenzoate: step 2/2. Its pathway is cofactor biosynthesis; tetrahydrofolylpolyglutamate biosynthesis. Functions in two distinct reactions of the de novo folate biosynthetic pathway. Catalyzes the addition of a glutamate residue to dihydropteroate (7,8-dihydropteroate or H2Pte) to form dihydrofolate (7,8-dihydrofolate monoglutamate or H2Pte-Glu). Also catalyzes successive additions of L-glutamate to tetrahydrofolate or 10-formyltetrahydrofolate or 5,10-methylenetetrahydrofolate, leading to folylpolyglutamate derivatives. The chain is Dihydrofolate synthase/folylpolyglutamate synthase (folC) from Buchnera aphidicola subsp. Acyrthosiphon pisum (strain APS) (Acyrthosiphon pisum symbiotic bacterium).